Reading from the N-terminus, the 437-residue chain is UDP-sugar transporter protein SLC35A5 (437 aa).

Residues M1–R21 lie on the Cytoplasmic side of the membrane. The chain crosses the membrane as a helical span at residues P22–S42. Residues S43–T65 are Lumenal-facing. Residues V66–I86 form a helical membrane-spanning segment. At K87–S106 the chain is on the cytoplasmic side. The helical transmembrane segment at F107–S129 threads the bilayer. Residues Y130 to Q132 lie on the Lumenal side of the membrane. A helical transmembrane segment spans residues P133 to L155. At K156 to H158 the chain is on the cytoplasmic side. A helical membrane pass occupies residues L159–A179. At S180 to R241 the chain is on the lumenal side. An N-linked (GlcNAc...) asparagine glycan is attached at N217. A helical membrane pass occupies residues L242–Y262. Residues N263–S276 are Cytoplasmic-facing. The helical transmembrane segment at I277–V297 threads the bilayer. The Lumenal portion of the chain corresponds to L298–N316. The helical transmembrane segment at A317–L337 threads the bilayer. At K338 to M343 the chain is on the cytoplasmic side. A helical membrane pass occupies residues F344 to F364. The Lumenal portion of the chain corresponds to D365 to R367. Residues P368–A388 traverse the membrane as a helical segment. Topologically, residues S389–L437 are cytoplasmic. A phosphoserine mark is found at S407, S429, and S432. The interval E412–L437 is disordered. A compositionally biased stretch (basic and acidic residues) spans L421 to D430.

The protein belongs to the nucleotide-sugar transporter family. SLC35A subfamily. In terms of assembly, probably forms homooligomers and heterooligomers with SLC35A1, SLC35A2, SLC35A3 and SLC35A4.

It is found in the golgi apparatus membrane. The catalysed reaction is UMP(out) + UDP-alpha-D-glucuronate(in) = UMP(in) + UDP-alpha-D-glucuronate(out). It catalyses the reaction UMP(out) + UDP-N-acetyl-alpha-D-glucosamine(in) = UMP(in) + UDP-N-acetyl-alpha-D-glucosamine(out). It carries out the reaction UDP-N-acetyl-alpha-D-galactosamine(in) + UMP(out) = UDP-N-acetyl-alpha-D-galactosamine(out) + UMP(in). In terms of biological role, probable UDP-sugar:UMP transmembrane antiporter involved in UDP-alpha-D-glucuronate/UDP-GlcA, UDP-GlcNAc/UDP-N-acetyl-alpha-D-glucosamine and UDP-N-acetyl-alpha-D-galactosamine/UDP-GalNAc transport from the cytosol to the lumen of the Golgi. The protein is UDP-sugar transporter protein SLC35A5 of Mus musculus (Mouse).